Consider the following 443-residue polypeptide: Na(+)-translocating ferredoxin:NAD(+) oxidoreductase complex subunit C (443 aa).

2 consecutive 4Fe-4S ferredoxin-type domains span residues 359–391 (ESAK…IAEY) and 398–428 (DKCE…VSSI). Residues cysteine 369, cysteine 372, cysteine 375, cysteine 379, cysteine 408, cysteine 411, cysteine 414, and cysteine 418 each coordinate [4Fe-4S] cluster.

The protein belongs to the 4Fe4S bacterial-type ferredoxin family. RnfC subfamily. As to quaternary structure, the complex is composed of six subunits: RnfA, RnfB, RnfC, RnfD, RnfE and RnfG. [4Fe-4S] cluster is required as a cofactor.

The protein resides in the cell membrane. The catalysed reaction is 2 reduced [2Fe-2S]-[ferredoxin] + Na(+)(in) + NAD(+) + H(+) = 2 oxidized [2Fe-2S]-[ferredoxin] + Na(+)(out) + NADH. Functionally, part of a membrane-bound complex that couples electron transfer with translocation of ions across the membrane. Couples electron transfer from reduced ferredoxin to NAD(+) with electrogenic movement of Na(+) out of the cell. Involved in caffeate respiration. The sequence is that of Na(+)-translocating ferredoxin:NAD(+) oxidoreductase complex subunit C from Acetobacterium woodii (strain ATCC 29683 / DSM 1030 / JCM 2381 / KCTC 1655 / WB1).